The sequence spans 255 residues: Propionicin-F (255 aa).

2 propeptides span residues 1-101 (MNTK…RVSC) and 145-255 (GTPT…DETV).

Its subcellular location is the secreted. Functionally, bacteriocin with specific antibacterial activity against strains of P.freudenreichii. No antibacterial activity was detected against P.acidipropionici, P.jensenii and P.thoenii. This Propionibacterium freudenreichii subsp. freudenreichii protein is Propionicin-F.